We begin with the raw amino-acid sequence, 370 residues long: Peptidyl-prolyl cis-trans isomerase D (370 aa).

Ser-5 carries the phosphoserine modification. The PPIase cyclophilin-type domain occupies 19 to 183 (FFDVDIGGER…KLCVIAECGE (165 aa)). Residue Lys-171 is modified to N6-acetyllysine. A chaperone activity region spans residues 185-215 (KEGDDGGIFPKDGSGDSHPDFPEDADIDLKD). Ser-198 carries the post-translational modification Phosphoserine. Residues 214–370 (KDVDKILLIT…EKAVYAKMFA (157 aa)) form an interaction with HSP90AB1 region. 3 TPR repeats span residues 223 to 256 (TEDL…VDSS), 273 to 306 (LSCV…DPSN), and 307 to 340 (TKAL…APED).

The protein belongs to the cyclophilin-type PPIase family. PPIase D subfamily. In terms of assembly, identified in ESR1 or NR3C1/GCR steroid receptor-chaperone complexes. Found in HSP90 chaperone complexes with kinase clients LCK or EIF2AK1. Two monomers associate with one HSP90 homodimer. Interacts with HSP90AA1. Interacts with HSP90AB1; PPID and FKBP4 compete for binding to HSP90AB1 and the interaction is mutually exclusive with the PPID:HSPA8 interaction. Interacts with HSPA8; PPID and STIP1 but not FKBP4 compete for binding to HSPA8 and the interaction is mutually exclusive with the PPID:HSP90AB1 interaction. Interacts with S100A1 and S100A2; the interactions dissociate the PPID:HSP90AA1 interaction. Interacts with S100A6. Interacts with MYB, ILF2, XRCC6, RACK1 and RPS3. Interacts with cytoplasmic dynein 1 intermediate chain (DYNC1I1 or DYNC1I2). In terms of tissue distribution, widely expressed.

It is found in the cytoplasm. It localises to the nucleus. The protein localises to the nucleolus. The protein resides in the nucleoplasm. It catalyses the reaction [protein]-peptidylproline (omega=180) = [protein]-peptidylproline (omega=0). Less sensitive to inhibition by cyclosporin A than is CYP-18. Functionally, PPIase that catalyzes the cis-trans isomerization of proline imidic peptide bonds in oligopeptides and may therefore assist protein folding. Proposed to act as a co-chaperone in HSP90 complexes such as in unligated steroid receptors heterocomplexes. Different co-chaperones seem to compete for association with HSP90 thus establishing distinct HSP90-co-chaperone-receptor complexes with the potential to exert tissue-specific receptor activity control. May have a preference for estrogen receptor complexes and is not found in glucocorticoid receptor complexes. May be involved in cytoplasmic dynein-dependent movement of the receptor from the cytoplasm to the nucleus. May regulate MYB by inhibiting its DNA-binding activity. Involved in regulation of AHR signaling by promoting the formation of the AHR:ARNT dimer; the function is independent of HSP90 but requires the chaperone activity. Involved in regulation of UV radiation-induced apoptosis. Promotes cell viability in anaplastic lymphoma kinase-positive anaplastic large-cell lymphoma (ALK+ ALCL) cell lines. (Microbial infection) May be involved in hepatitis C virus (HCV) replication and release. This is Peptidyl-prolyl cis-trans isomerase D from Homo sapiens (Human).